Consider the following 70-residue polypeptide: Small ribosomal subunit protein bS21 (70 aa).

The disordered stretch occupies residues 43-70; sequence TERKRKAAAAVKRQHKRLRSLTLPPKLY. Positions 45 to 61 are enriched in basic residues; sequence RKRKAAAAVKRQHKRLR.

Belongs to the bacterial ribosomal protein bS21 family.

The polypeptide is Small ribosomal subunit protein bS21 (Dechloromonas aromatica (strain RCB)).